Reading from the N-terminus, the 213-residue chain is 3-hexulose-6-phosphate synthase 2 (213 aa).

This sequence belongs to the HPS/KGPDC family. HPS subfamily.

It carries out the reaction D-ribulose 5-phosphate + formaldehyde = D-arabino-hex-3-ulose 6-phosphate. The protein operates within one-carbon metabolism; formaldehyde assimilation via RuMP pathway; D-fructose 6-phosphate from D-ribulose 5-phosphate and formaldehyde: step 1/2. Its function is as follows. Catalyzes the condensation of ribulose 5-phosphate with formaldehyde to form 3-hexulose 6-phosphate. This is 3-hexulose-6-phosphate synthase 2 from Staphylococcus saprophyticus subsp. saprophyticus (strain ATCC 15305 / DSM 20229 / NCIMB 8711 / NCTC 7292 / S-41).